The sequence spans 164 residues: Protein SprT (164 aa).

One can recognise a SprT-like domain in the interval Tyr-13–Val-156. His-69 is a binding site for Zn(2+). Residue Glu-70 is part of the active site. His-73 is a binding site for Zn(2+).

Belongs to the SprT family. Zn(2+) serves as cofactor.

It localises to the cytoplasm. This Pseudomonas putida (strain ATCC 700007 / DSM 6899 / JCM 31910 / BCRC 17059 / LMG 24140 / F1) protein is Protein SprT.